Consider the following 168-residue polypeptide: GTP-dependent dephospho-CoA kinase (168 aa).

Positions 49, 50, 51, 68, 70, and 120 each coordinate GTP.

Belongs to the GTP-dependent DPCK family.

It carries out the reaction 3'-dephospho-CoA + GTP = GDP + CoA + H(+). The protein operates within cofactor biosynthesis; coenzyme A biosynthesis. Catalyzes the GTP-dependent phosphorylation of the 3'-hydroxyl group of dephosphocoenzyme A to form coenzyme A (CoA). This Pyrobaculum neutrophilum (strain DSM 2338 / JCM 9278 / NBRC 100436 / V24Sta) (Thermoproteus neutrophilus) protein is GTP-dependent dephospho-CoA kinase.